A 177-amino-acid chain; its full sequence is B-phycoerythrin beta chain (177 aa).

Residues lysine 28, asparagine 35, aspartate 39, cysteine 50, aspartate 54, cysteine 61, asparagine 72, 77–78, cysteine 82, arginine 129, 147–148, 154–158, and cysteine 158 contribute to the (2R,3E)-phycoerythrobilin site; these read RR, SQ, and PQGDC. Residue asparagine 72 is modified to N4-methylasparagine.

Belongs to the phycobiliprotein family. Heterotetramer of 2 different alpha chains and 2 identical beta chains. The subunit composition could comprise any combination of 2 out of 4 different alpha units with an invariant beta unit. Post-translationally, contains three covalently linked phycoerythrobilin chromophores.

The protein localises to the plastid. It is found in the chloroplast thylakoid membrane. In terms of biological role, light-harvesting photosynthetic tetrapyrrole chromophore-protein from the phycobiliprotein complex. This Rhodomonas sp. (strain CS 24) (Chroomonas sp. (strain CS24)) protein is B-phycoerythrin beta chain (cpeB).